We begin with the raw amino-acid sequence, 152 residues long: SUZ RNA-binding domain-containing (152 aa).

The interval 28–152 (KISQRENNNT…DGSQGFRQGR (125 aa)) is disordered. The region spanning 42 to 107 (RAPVVIQDDS…ARKRILGSAS (66 aa)) is the SUZ domain. 2 stretches are compositionally biased toward basic and acidic residues: residues 89–100 (AQREAEYAEARK) and 113–130 (EKPV…EEIR). The SUZ-C domain occupies 111 to 152 (EQEKPVAERPARINQVEEIRQQNNVIRQPLGPDGSQGFRQGR).

Belongs to the SZRD1 family.

The polypeptide is SUZ RNA-binding domain-containing (szrd1) (Xenopus laevis (African clawed frog)).